A 49-amino-acid chain; its full sequence is Large ribosomal subunit protein bL33 (49 aa).

This sequence belongs to the bacterial ribosomal protein bL33 family.

The chain is Large ribosomal subunit protein bL33 from Alkaliphilus oremlandii (strain OhILAs) (Clostridium oremlandii (strain OhILAs)).